Here is an 80-residue protein sequence, read N- to C-terminus: Small ribosomal subunit protein bS18 (80 aa).

The protein belongs to the bacterial ribosomal protein bS18 family. In terms of assembly, part of the 30S ribosomal subunit. Forms a tight heterodimer with protein bS6.

Its function is as follows. Binds as a heterodimer with protein bS6 to the central domain of the 16S rRNA, where it helps stabilize the platform of the 30S subunit. The polypeptide is Small ribosomal subunit protein bS18 (Staphylococcus haemolyticus (strain JCSC1435)).